We begin with the raw amino-acid sequence, 229 residues long: PKHD-type hydroxylase OCAR_6723/OCA5_c13470 (229 aa).

A Fe2OG dioxygenase domain is found at H78 to S180. Residues H98, D100, and H161 each coordinate Fe cation. Position 171 (R171) interacts with 2-oxoglutarate.

It depends on Fe(2+) as a cofactor. L-ascorbate is required as a cofactor.

This chain is PKHD-type hydroxylase OCAR_6723/OCA5_c13470, found in Afipia carboxidovorans (strain ATCC 49405 / DSM 1227 / KCTC 32145 / OM5) (Oligotropha carboxidovorans).